Here is a 226-residue protein sequence, read N- to C-terminus: Orotate phosphoribosyltransferase (226 aa).

5-phospho-alpha-D-ribose 1-diphosphate contacts are provided by residues Arg-107, Lys-108, Lys-111, and 133–141 (EDLTTDGGS). Thr-137 is an orotate binding site.

Belongs to the purine/pyrimidine phosphoribosyltransferase family. PyrE subfamily. In terms of assembly, homodimer. Requires Mg(2+) as cofactor.

The enzyme catalyses orotidine 5'-phosphate + diphosphate = orotate + 5-phospho-alpha-D-ribose 1-diphosphate. It participates in pyrimidine metabolism; UMP biosynthesis via de novo pathway; UMP from orotate: step 1/2. In terms of biological role, catalyzes the transfer of a ribosyl phosphate group from 5-phosphoribose 1-diphosphate to orotate, leading to the formation of orotidine monophosphate (OMP). The protein is Orotate phosphoribosyltransferase of Ruegeria sp. (strain TM1040) (Silicibacter sp.).